The following is a 307-amino-acid chain: tRNA pseudouridine synthase B (307 aa).

The Nucleophile role is filled by Asp-47.

The protein belongs to the pseudouridine synthase TruB family. Type 1 subfamily.

The enzyme catalyses uridine(55) in tRNA = pseudouridine(55) in tRNA. In terms of biological role, responsible for synthesis of pseudouridine from uracil-55 in the psi GC loop of transfer RNAs. In Chromohalobacter salexigens (strain ATCC BAA-138 / DSM 3043 / CIP 106854 / NCIMB 13768 / 1H11), this protein is tRNA pseudouridine synthase B.